The chain runs to 326 residues: Protein phosphatase 1 regulatory subunit SDS22 homolog (326 aa).

Positions 1–22 (MSNDKSAEVVVLPRENDEESKE) are disordered. LRR repeat units lie at residues 35–57 (DIDS…LTGF), 58–80 (PKIE…ISSL), 81–102 (VTLT…LESL), 103–126 (VNLV…KLTK), 128–146 (ETLY…LEAL), 147–170 (TQLK…HLVN), 172–190 (DELF…VETL), 191–212 (QKLS…VEQL), 213–236 (NNLK…PLTN), 238–256 (LLLD…VERL), 257–280 (ESLN…QLSK), and 281–304 (LKGL…QYRR).

Belongs to the SDS22 family.

The protein resides in the nucleus. Functionally, regulatory subunit of protein phosphatase 1. This Caenorhabditis elegans protein is Protein phosphatase 1 regulatory subunit SDS22 homolog (sds-22).